The sequence spans 133 residues: Putative pre-16S rRNA nuclease (133 aa).

It belongs to the YqgF nuclease family.

It localises to the cytoplasm. Could be a nuclease involved in processing of the 5'-end of pre-16S rRNA. This is Putative pre-16S rRNA nuclease from Alcanivorax borkumensis (strain ATCC 700651 / DSM 11573 / NCIMB 13689 / SK2).